Here is a 466-residue protein sequence, read N- to C-terminus: Ornithine decarboxylase (466 aa).

Lysine 116 bears the N6-(pyridoxal phosphate)lysine mark. Residues serine 247, glycine 286, and 318–321 (EPGR) contribute to the pyridoxal 5'-phosphate site. 362–363 (FD) contacts substrate. The Proton donor; shared with dimeric partner role is filled by cysteine 411. Aspartate 412 contacts substrate. Position 441 (tyrosine 441) interacts with pyridoxal 5'-phosphate.

This sequence belongs to the Orn/Lys/Arg decarboxylase class-II family. In terms of assembly, homodimer. Only the dimer is catalytically active, as the active sites are constructed of residues from both monomers. Pyridoxal 5'-phosphate serves as cofactor.

It localises to the cytoplasm. The enzyme catalyses L-ornithine + H(+) = putrescine + CO2. Its pathway is amine and polyamine biosynthesis; putrescine biosynthesis via L-ornithine pathway; putrescine from L-ornithine: step 1/1. With respect to regulation, inhibited by antizyme (AZ) OAZ1 in response to polyamine levels. AZ inhibits the assembly of the functional homodimer by binding to ODC monomers and targeting them for ubiquitin-independent proteolytic destruction by the 26S proteasome. Functionally, catalyzes the first and rate-limiting step of polyamine biosynthesis that converts ornithine into putrescine, which is the precursor for the polyamines, spermidine and spermine. Polyamines are essential for cell proliferation and are implicated in cellular processes, ranging from DNA replication to apoptosis. This chain is Ornithine decarboxylase, found in Saccharomyces cerevisiae (strain ATCC 204508 / S288c) (Baker's yeast).